A 199-amino-acid polypeptide reads, in one-letter code: MESLDDIVREIMSCRKCDLHKTKTNYVPGVGNEKAEIVFVGEAPGRDEDLKGEPFVGAAGKLLTEMLASIGLRREDVYITNVLKCRPPNNRDPTPEEVEKCGDYLVRQLEAIRPNVIVCLGRFAAQFIFNLFDLEFTTISRVKGKVYEVERWGKKVKVIAIYHPAAVLYRPQLREEYESDFKKIGELCGKKQPTLFDYL.

Residues C14 and C17 each coordinate [4Fe-4S] cluster. Uracil contacts are provided by residues 41 to 43, F55, and N81; that span reads GEA. A pseudo-FCL region spans residues 77–114; the sequence is VYITNVLKCRPPNNRDPTPEEVEKCGDYLVRQLEAIRP. 2 residues coordinate [4Fe-4S] cluster: C85 and C101. H163 contacts uracil.

The protein belongs to the uracil-DNA glycosylase (UDG) superfamily. Type 4 (UDGa) family.

The enzyme catalyses Hydrolyzes single-stranded DNA or mismatched double-stranded DNA and polynucleotides, releasing free uracil.. Product-inhibited by both uracil and apurinic/apyrimidinic sites. In terms of biological role, removes uracil bases that are present in DNA as a result of either deamination of cytosine or misincorporation of dUMP instead of dTMP. Can remove uracil from double-stranded DNA containing either a U/G or U/A base pair as well as from single-stranded DNA. This chain is Type-4 uracil-DNA glycosylase, found in Archaeoglobus fulgidus (strain ATCC 49558 / DSM 4304 / JCM 9628 / NBRC 100126 / VC-16).